Reading from the N-terminus, the 520-residue chain is MRVESGSAQERGILLESLSTLLEKTTASHEGRAPGNRELTDLLPPEVCSLLNPAAIYANNEISLRDVEVYGFDYDYTLAQYADALHPEIFSTARDILIEHYKYPEGIRKYDYNPSFAIRGLHYDIQKSLLMKIDAFHYVQLGTAYRGLQPVPDEEVIELYGGTQHIPLYQMSGFYGKGPSIKQFMDIFSLPEMALLSCVVDYFLGHSLEFDQAHLYKDVTDAIRDVHVKGLMYQWIEQDMEKYILRGDETFAVLSRLVAHGKQLFLITNSPFSFVDKGMRHMVGPDWRQLFDVVIVQADKPSFFTDRRKPFRKLDEKGSLQWDRITRLEKGKIYRQGNLFDFLRLTEWRGPRVLYFGDHLYSDLADLMLRHGWRTGAIIPELEREIRIINTEQYMHSLTWQQALTGLLERMQTYQDAESRQVLAAWMKERQELRCITKALFNAQFGSIFRTFHNPTYFSRRLVRFSDLYMASLSCLLNYRVDFTFYPRRTPLQHEAPLWMDQLCTGCMKTPFLGDMAHIR.

The active-site Nucleophile is Asp73. Residues Asp73, Asp75, and Asp358 each coordinate Mg(2+). The Proton donor role is filled by Asp75.

It belongs to the 5'(3')-deoxyribonucleotidase family. In terms of assembly, interacts with tyrosine 3-monooxygenase TH; the interaction results in reduced phosphorylation and decreased catalytic activity of TH.

Its subcellular location is the cytoplasm. In terms of biological role, promotes dephosphorylation of tyrosine 3-monooxygenase TH which decreases TH catalytic activity and leads to reduced synthesis of catecholamines including dopamine, noradrenaline and adrenaline. The exact mechanism of activity is unknown but may act as a phosphatase or promote the activity of phosphatases or may inhibit phosphorylation by acting as a barrier to interfere with protein kinase access. This is 5'-nucleotidase domain-containing protein 2 (NT5DC2) from Homo sapiens (Human).